A 371-amino-acid chain; its full sequence is Forkhead box protein J1.2 (371 aa).

Disordered regions lie at residues 45–74 (ANSRPPLPRASQGPCSPPAGDTASCQAPRT) and 80–99 (VAVPTAWASLPTPSPSPVQE). The segment at residues 109–203 (KPPYSYATLI…VNGVLKRRRM (95 aa)) is a DNA-binding region (fork-head). Residues 228-248 (PSSHHMQHISGGHRQSRRYEK) form a disordered region.

This sequence belongs to the FOXJ1 family. As to expression, expressed diffusely through much of gastrula and neurula stage embryos. At stage 23 (late neurula), limited to the otic vesicle. By stage 28 (tailbud), also expressed transiently in the presumptive nephrostomes of the pronephros. At stage 35 (early tadpole), expressed broadly in the head and strongly expressed in the developing gill structures.

It is found in the nucleus. In terms of biological role, key transcription factor required for motile ciliogenesis. Activates genes essential for motile cilia formation and function. The chain is Forkhead box protein J1.2 from Xenopus tropicalis (Western clawed frog).